The sequence spans 160 residues: MAIATADLFDSHEDILESCETQFRSYGGRAAFHGPIRTVRCHQDNALLKSLLSTPGDGAVLVVDGGGSLRTALVGDLIAGLGVKNGWAGIVVHGAIRDSEAIGGLDIGLKALGSNPRKSTKTGAGEADRPVAFGGCTFTPGHWLYSDADGVVVAPRRLHD.

Substrate contacts are provided by residues 75 to 78 and Arg97; that span reads GDLI. An a divalent metal cation-binding site is contributed by Asp98.

This sequence belongs to the class II aldolase/RraA-like family. As to quaternary structure, homotrimer. A divalent metal cation serves as cofactor.

It carries out the reaction 4-hydroxy-4-methyl-2-oxoglutarate = 2 pyruvate. The enzyme catalyses oxaloacetate + H(+) = pyruvate + CO2. Functionally, catalyzes the aldol cleavage of 4-hydroxy-4-methyl-2-oxoglutarate (HMG) into 2 molecules of pyruvate. Also contains a secondary oxaloacetate (OAA) decarboxylase activity due to the common pyruvate enolate transition state formed following C-C bond cleavage in the retro-aldol and decarboxylation reactions. The polypeptide is Putative 4-hydroxy-4-methyl-2-oxoglutarate aldolase (Rhodospirillum centenum (strain ATCC 51521 / SW)).